We begin with the raw amino-acid sequence, 385 residues long: Alanine racemase (385 aa).

Catalysis depends on lysine 40, which acts as the Proton acceptor; specific for D-alanine. Residue lysine 40 is modified to N6-(pyridoxal phosphate)lysine. Substrate is bound at residue arginine 139. Residue tyrosine 268 is the Proton acceptor; specific for L-alanine of the active site. Methionine 315 lines the substrate pocket.

It belongs to the alanine racemase family. Pyridoxal 5'-phosphate serves as cofactor.

It catalyses the reaction L-alanine = D-alanine. Its pathway is amino-acid biosynthesis; D-alanine biosynthesis; D-alanine from L-alanine: step 1/1. Catalyzes the interconversion of L-alanine and D-alanine. May also act on other amino acids. This is Alanine racemase (alr) from Anoxybacillus flavithermus (strain DSM 21510 / WK1).